We begin with the raw amino-acid sequence, 231 residues long: Small ribosomal subunit protein uS3 (231 aa).

One can recognise a KH type-2 domain in the interval 38–106 (IRVYLKNRLK…KTFVNIMEIK (69 aa)).

The protein belongs to the universal ribosomal protein uS3 family. Part of the 30S ribosomal subunit. Forms a tight complex with proteins S10 and S14.

Functionally, binds the lower part of the 30S subunit head. Binds mRNA in the 70S ribosome, positioning it for translation. The sequence is that of Small ribosomal subunit protein uS3 from Endomicrobium trichonymphae.